The sequence spans 1373 residues: DNA-directed RNA polymerase subunit beta (1373 aa).

It belongs to the RNA polymerase beta chain family. As to quaternary structure, the RNAP catalytic core consists of 2 alpha, 1 beta, 1 beta' and 1 omega subunit. When a sigma factor is associated with the core the holoenzyme is formed, which can initiate transcription.

It carries out the reaction RNA(n) + a ribonucleoside 5'-triphosphate = RNA(n+1) + diphosphate. In terms of biological role, DNA-dependent RNA polymerase catalyzes the transcription of DNA into RNA using the four ribonucleoside triphosphates as substrates. The protein is DNA-directed RNA polymerase subunit beta of Rickettsia peacockii (strain Rustic).